Reading from the N-terminus, the 238-residue chain is uncharacterized protein (238 aa).

7 consecutive transmembrane segments (helical) span residues 22–42, 49–69, 78–98, 105–125, 141–161, 166–186, and 208–228; these read VYGW…GLYA, LFSL…YIQA, AVMG…GTMV, FGGG…GLSA, ILML…VVSL, PLMY…LTVV, and LSLI…WYLL.

Belongs to the BI1 family.

The protein localises to the cell membrane. This is an uncharacterized protein from Chlamydia muridarum (strain MoPn / Nigg).